Consider the following 367-residue polypeptide: Glutamate 5-kinase (367 aa).

Position 10 (K10) interacts with ATP. Substrate is bound by residues S50, D137, and N149. Residues 169 to 170 and 211 to 217 each bind ATP; these read TD and TGGMGTK. The PUA domain occupies 275–353; that stretch reads AGELTVDAGA…QQIDAILGYE (79 aa).

This sequence belongs to the glutamate 5-kinase family.

It is found in the cytoplasm. It carries out the reaction L-glutamate + ATP = L-glutamyl 5-phosphate + ADP. It participates in amino-acid biosynthesis; L-proline biosynthesis; L-glutamate 5-semialdehyde from L-glutamate: step 1/2. Functionally, catalyzes the transfer of a phosphate group to glutamate to form L-glutamate 5-phosphate. The chain is Glutamate 5-kinase from Klebsiella pneumoniae (strain 342).